We begin with the raw amino-acid sequence, 259 residues long: MTKVLIAGFAGAMGQQAVTLVKSLPGFELSAVVGHHLTDLDPTSYGLENSTTVYADREQVETGAADIWLDFTVPAAVFENVSYALRHGMAPVVGTTGLSDEQVEELQQLAKQNGLGGLIAPNFGMSAVLLMKFAKEAAAYFPEVEIIEMHHEDKKDAPSGTALATAKLISENRPAHETAPDSTESLPGARGGDYQGIKLHAVRLPGYVAHEQVLFGGSGEALTIRQDSFDRSSFMSGVKVGLEKVGTLTELVVGLENVL.

NAD(+) contacts are provided by residues 8–13, 94–96, and 120–123; these read GFAGAM, GTT, and APNF. H150 serves as the catalytic Proton donor/acceptor. H151 is a binding site for (S)-2,3,4,5-tetrahydrodipicolinate. K154 (proton donor) is an active-site residue. 160-161 serves as a coordination point for (S)-2,3,4,5-tetrahydrodipicolinate; sequence GT.

The protein belongs to the DapB family.

It localises to the cytoplasm. It catalyses the reaction (S)-2,3,4,5-tetrahydrodipicolinate + NAD(+) + H2O = (2S,4S)-4-hydroxy-2,3,4,5-tetrahydrodipicolinate + NADH + H(+). The catalysed reaction is (S)-2,3,4,5-tetrahydrodipicolinate + NADP(+) + H2O = (2S,4S)-4-hydroxy-2,3,4,5-tetrahydrodipicolinate + NADPH + H(+). Its pathway is amino-acid biosynthesis; L-lysine biosynthesis via DAP pathway; (S)-tetrahydrodipicolinate from L-aspartate: step 4/4. Catalyzes the conversion of 4-hydroxy-tetrahydrodipicolinate (HTPA) to tetrahydrodipicolinate. The sequence is that of 4-hydroxy-tetrahydrodipicolinate reductase from Limosilactobacillus fermentum (strain NBRC 3956 / LMG 18251) (Lactobacillus fermentum).